The chain runs to 358 residues: Biotin synthase (358 aa).

Residues 44 to 272 enclose the Radical SAM core domain; sequence NRVRLNYLVN…DSEVRAAAGR (229 aa). The [4Fe-4S] cluster site is built by C59, C63, and C66. [2Fe-2S] cluster is bound by residues C103, C136, C196, and R267.

Belongs to the radical SAM superfamily. Biotin synthase family. As to quaternary structure, homodimer. [4Fe-4S] cluster serves as cofactor. The cofactor is [2Fe-2S] cluster.

It carries out the reaction (4R,5S)-dethiobiotin + (sulfur carrier)-SH + 2 reduced [2Fe-2S]-[ferredoxin] + 2 S-adenosyl-L-methionine = (sulfur carrier)-H + biotin + 2 5'-deoxyadenosine + 2 L-methionine + 2 oxidized [2Fe-2S]-[ferredoxin]. Its pathway is cofactor biosynthesis; biotin biosynthesis; biotin from 7,8-diaminononanoate: step 2/2. In terms of biological role, catalyzes the conversion of dethiobiotin (DTB) to biotin by the insertion of a sulfur atom into dethiobiotin via a radical-based mechanism. This Cutibacterium acnes (strain DSM 16379 / KPA171202) (Propionibacterium acnes) protein is Biotin synthase.